The primary structure comprises 272 residues: 3-methyl-2-oxobutanoate hydroxymethyltransferase (272 aa).

Residues D51 and D90 each contribute to the Mg(2+) site. Residues 51-52 (DS), D90, and K118 each bind 3-methyl-2-oxobutanoate. E120 provides a ligand contact to Mg(2+). E187 (proton acceptor) is an active-site residue.

The protein belongs to the PanB family. As to quaternary structure, homodecamer; pentamer of dimers. It depends on Mg(2+) as a cofactor.

The protein resides in the cytoplasm. The enzyme catalyses 3-methyl-2-oxobutanoate + (6R)-5,10-methylene-5,6,7,8-tetrahydrofolate + H2O = 2-dehydropantoate + (6S)-5,6,7,8-tetrahydrofolate. It participates in cofactor biosynthesis; (R)-pantothenate biosynthesis; (R)-pantoate from 3-methyl-2-oxobutanoate: step 1/2. Catalyzes the reversible reaction in which hydroxymethyl group from 5,10-methylenetetrahydrofolate is transferred onto alpha-ketoisovalerate to form ketopantoate. The polypeptide is 3-methyl-2-oxobutanoate hydroxymethyltransferase (Xylella fastidiosa (strain 9a5c)).